A 213-amino-acid chain; its full sequence is LexA repressor 2 (213 aa).

A DNA-binding region (H-T-H motif) is located at residues 27 to 47; the sequence is QTEIARAFGFKGVRAAQYHLE. Active-site for autocatalytic cleavage activity residues include S133 and K170.

This sequence belongs to the peptidase S24 family. In terms of assembly, homodimer.

The catalysed reaction is Hydrolysis of Ala-|-Gly bond in repressor LexA.. Its function is as follows. Represses a number of genes involved in the response to DNA damage (SOS response), including recA and lexA. In the presence of single-stranded DNA, RecA interacts with LexA causing an autocatalytic cleavage which disrupts the DNA-binding part of LexA, leading to derepression of the SOS regulon and eventually DNA repair. The sequence is that of LexA repressor 2 from Xanthomonas oryzae pv. oryzae (strain KACC10331 / KXO85).